A 153-amino-acid chain; its full sequence is Large ribosomal subunit protein uL13 (153 aa).

This sequence belongs to the universal ribosomal protein uL13 family. In terms of assembly, part of the 50S ribosomal subunit.

This protein is one of the early assembly proteins of the 50S ribosomal subunit, although it is not seen to bind rRNA by itself. It is important during the early stages of 50S assembly. In Chelativorans sp. (strain BNC1), this protein is Large ribosomal subunit protein uL13.